A 70-amino-acid chain; its full sequence is Guanine nucleotide-binding protein subunit gamma-1 (70 aa).

A Cysteine methyl ester modification is found at C67. The S-geranylgeranyl cysteine moiety is linked to residue C67. A propeptide spans 68-70 (TVL) (removed in mature form).

This sequence belongs to the G protein gamma family. G proteins are composed of 3 units, alpha, beta and gamma. As to expression, predominantly expressed in the central nervous system.

Its subcellular location is the cell membrane. Guanine nucleotide-binding proteins (G proteins) are involved as a modulator or transducer in various transmembrane signaling systems. The beta and gamma chains are required for the GTPase activity, for replacement of GDP by GTP, and for G protein-effector interaction. The sequence is that of Guanine nucleotide-binding protein subunit gamma-1 (Ggamma1) from Drosophila melanogaster (Fruit fly).